We begin with the raw amino-acid sequence, 147 residues long: D-aminoacyl-tRNA deacylase (147 aa).

The Gly-cisPro motif, important for rejection of L-amino acids motif lies at 137–138 (GP).

The protein belongs to the DTD family. In terms of assembly, homodimer.

The protein resides in the cytoplasm. The enzyme catalyses glycyl-tRNA(Ala) + H2O = tRNA(Ala) + glycine + H(+). It carries out the reaction a D-aminoacyl-tRNA + H2O = a tRNA + a D-alpha-amino acid + H(+). In terms of biological role, an aminoacyl-tRNA editing enzyme that deacylates mischarged D-aminoacyl-tRNAs. Also deacylates mischarged glycyl-tRNA(Ala), protecting cells against glycine mischarging by AlaRS. Acts via tRNA-based rather than protein-based catalysis; rejects L-amino acids rather than detecting D-amino acids in the active site. By recycling D-aminoacyl-tRNA to D-amino acids and free tRNA molecules, this enzyme counteracts the toxicity associated with the formation of D-aminoacyl-tRNA entities in vivo and helps enforce protein L-homochirality. This is D-aminoacyl-tRNA deacylase from Jannaschia sp. (strain CCS1).